We begin with the raw amino-acid sequence, 162 residues long: Fibroblast growth factor 22 (162 aa).

The first 22 residues, 1-22 (MRSRLWLGLAWLLLARAPGAPG), serve as a signal peptide directing secretion.

Belongs to the heparin-binding growth factors family. In terms of assembly, interacts with FGFR1 and FGFR2. Interacts with FGFBP1. In terms of tissue distribution, preferentially expressed in skin; low expression in brain. Expressed in the inner root sheath of the hair follicle.

The protein localises to the secreted. Plays a role in the fasting response, glucose homeostasis, lipolysis and lipogenesis. Can stimulate cell proliferation (in vitro). May be involved in hair development. The sequence is that of Fibroblast growth factor 22 (Fgf22) from Mus musculus (Mouse).